The following is a 70-amino-acid chain: Mu-conotoxin PnIVB (70 aa).

Positions 1–20 (MMSKLGVLLIICLLLCPLTA) are cleaved as a signal peptide. Residues 21–51 (VPQDGDQPADQPAERMQDDISSEHHPFFDPV) constitute a propeptide that is removed on maturation.

In terms of processing, contains 3 disulfide bonds. They are not added, since framework IV presents two different connectivities (I-V, II-III, IV-VI and I-III, II-V, IV-VI). As to expression, expressed by the venom duct.

It is found in the secreted. Its function is as follows. Mu-conotoxins block voltage-gated sodium channels (Nav). Blocks reversibly sodium channels in molluskan neurons, but has no effect on sodium currents in bovine chromaffin cells or in rat brain synaptosomes. Induces paralysis in bivalve mollusks (Mytilus). No effect are observed on fish (Gambusia) and fly larvae (Sarcophaga). Is approximately 6 times more potent than PnIVA in blockade of the sodium current in Lymnaea neurons. The chain is Mu-conotoxin PnIVB from Conus pennaceus (Feathered cone).